Reading from the N-terminus, the 484-residue chain is HSPB1-associated protein 1 (484 aa).

Residues 1 to 26 (MAARPGAITNADSASGGGEEEGKHVK) are disordered. Positions 88–208 (ETACNYVEAT…EDTPFLYPTR (121 aa)) are interaction with HSPB1. A JmjC domain is found at 124-288 (WAYADYKYFV…HQTRVEEAIT (165 aa)). The segment at 396–429 (TPSSEEPSSERGGIFENDGEDFVSKNGKSFGKRQ) is disordered.

In terms of assembly, interacts with CRYAB and HSPB1.

It localises to the cytoplasm. May play a role in cellular stress response. The protein is HSPB1-associated protein 1 (HSPBAP1) of Bos taurus (Bovine).